A 269-amino-acid chain; its full sequence is uncharacterized protein (269 aa).

Transmembrane regions (helical) follow at residues 21 to 43 (LNVWSITLFQNFRLTAELIILFT), 48 to 70 (LFLIPVMNVFAFFIHNVVNFSLI), 121 to 143 (YLILLFVSLLILGLITGITVFTF), 147 to 166 (FIIAYLIFIVLLLILYFWII), 205 to 227 (SLEVLFSSFVIGFFSLFIFLFQF), and 242 to 264 (FVAFSNTLLIYLFGVISVSYLLW).

Its subcellular location is the cell membrane. This is an uncharacterized protein from Aquifex aeolicus (strain VF5).